The following is a 281-amino-acid chain: Pantothenate synthetase (281 aa).

26–33 (MGNLHDGH) contacts ATP. Histidine 33 serves as the catalytic Proton donor. Glutamine 57 contacts (R)-pantoate. Beta-alanine is bound at residue glutamine 57. 145–148 (GEKD) is a binding site for ATP. Glutamine 151 provides a ligand contact to (R)-pantoate. Residue 182 to 185 (MSSR) coordinates ATP.

It belongs to the pantothenate synthetase family. As to quaternary structure, homodimer.

It is found in the cytoplasm. The catalysed reaction is (R)-pantoate + beta-alanine + ATP = (R)-pantothenate + AMP + diphosphate + H(+). It functions in the pathway cofactor biosynthesis; (R)-pantothenate biosynthesis; (R)-pantothenate from (R)-pantoate and beta-alanine: step 1/1. Catalyzes the condensation of pantoate with beta-alanine in an ATP-dependent reaction via a pantoyl-adenylate intermediate. This Idiomarina loihiensis (strain ATCC BAA-735 / DSM 15497 / L2-TR) protein is Pantothenate synthetase.